The following is a 353-amino-acid chain: E3 ubiquitin-protein ligase Os03g0188200 (353 aa).

A helical transmembrane segment spans residues 48 to 68 (VVVLVALITAFVLLTVFSVLI). The RING-type; atypical zinc-finger motif lies at 133–175 (CAVCLAEFADSDELRVLPACCHVFHPDCIDPWLAAAVTCPLCR). Composition is skewed to basic and acidic residues over residues 308-318 (ADWDAGEEHGG) and 340-353 (GSKE…LNRV). A disordered region spans residues 308–353 (ADWDAGEEHGGSKRVHPVAGAQDETPSGSGSDGSKENSDSDALNRV).

The protein localises to the membrane. The enzyme catalyses S-ubiquitinyl-[E2 ubiquitin-conjugating enzyme]-L-cysteine + [acceptor protein]-L-lysine = [E2 ubiquitin-conjugating enzyme]-L-cysteine + N(6)-ubiquitinyl-[acceptor protein]-L-lysine.. It participates in protein modification; protein ubiquitination. Its function is as follows. Possesses E3 ubiquitin-protein ligase in vitro. The protein is E3 ubiquitin-protein ligase Os03g0188200 of Oryza sativa subsp. japonica (Rice).